The primary structure comprises 205 residues: Inactive ribonuclease-like protein 9 (205 aa).

The first 24 residues, 1–24, serve as a signal peptide directing secretion; it reads MMLITTHSLPLLLLLLQLWQPLQF. Disulfide bonds link cysteine 97–cysteine 152, cysteine 115–cysteine 167, and cysteine 122–cysteine 129. Residues asparagine 130 and asparagine 142 are each glycosylated (N-linked (GlcNAc...) asparagine).

This sequence belongs to the pancreatic ribonuclease family.

It is found in the secreted. Does not exhibit any ribonuclease activity. In Cebus albifrons (White-fronted capuchin), this protein is Inactive ribonuclease-like protein 9 (RNASE9).